The primary structure comprises 253 residues: Phosphoadenosine 5'-phosphosulfate reductase (253 aa).

C239 acts as the Nucleophile; cysteine thiosulfonate intermediate in catalysis.

This sequence belongs to the PAPS reductase family. CysH subfamily.

It localises to the cytoplasm. It carries out the reaction [thioredoxin]-disulfide + sulfite + adenosine 3',5'-bisphosphate + 2 H(+) = [thioredoxin]-dithiol + 3'-phosphoadenylyl sulfate. The protein operates within sulfur metabolism; hydrogen sulfide biosynthesis; sulfite from sulfate: step 3/3. In terms of biological role, catalyzes the formation of sulfite from phosphoadenosine 5'-phosphosulfate (PAPS) using thioredoxin as an electron donor. In Aliivibrio salmonicida (strain LFI1238) (Vibrio salmonicida (strain LFI1238)), this protein is Phosphoadenosine 5'-phosphosulfate reductase.